The following is a 269-amino-acid chain: Aquaporin-1 (269 aa).

Residues 1–11 (MASEIKKKLFW) lie on the Cytoplasmic side of the membrane. Residues 12 to 29 (RAVVAEFLAMTLFVFISI) form a helical membrane-spanning segment. The Extracellular portion of the chain corresponds to 30 to 46 (GSALGFNYPLERNQTLV). The chain crosses the membrane as a helical span at residues 47–65 (QDNVKVSLAFGLSIATLAQ). The Cytoplasmic portion of the chain corresponds to 66-68 (SVG). The stretch at 69 to 82 (HISGAHLNPAVTLG) is an intramembrane region. An NPA 1 motif is present at residues 76–78 (NPA). Over 83–90 (LLLSCQIS) the chain is Cytoplasmic. Residues 91 to 109 (ILRAVMYIIAQCVGAIVAT) traverse the membrane as a helical segment. At 110-133 (AILSGITSSLVDNSLGRNDLAHGV) the chain is on the extracellular side. A helical transmembrane segment spans residues 134 to 153 (NSGQGLGIEIIGTLQLVLCV). Residues 154 to 163 (LATTDRRRRD) lie on the Cytoplasmic side of the membrane. A helical transmembrane segment spans residues 164-181 (LGGSAPLAIGLSVALGHL). Over 182-186 (LAIDY) the chain is Extracellular. An intramembrane segment occupies 187 to 199 (TGCGINPARSFGS). Positions 192–194 (NPA) match the NPA 2 motif. At 200 to 206 (AVLTRNF) the chain is on the extracellular side. Asn-205 is a glycosylation site (N-linked (GlcNAc...) asparagine). Residues 207-224 (SNHWIFWVGPFIGGALAV) form a helical membrane-spanning segment. Residues 225 to 269 (LIYDFILAPRSSDFTDRMKVWTSGQVEEYDLDADDINSRVEMKPK) lie on the Cytoplasmic side of the membrane. At Ser-247 the chain carries Phosphoserine. The residue at position 253 (Tyr-253) is a Phosphotyrosine. Residue Ser-262 is modified to Phosphoserine.

This sequence belongs to the MIP/aquaporin (TC 1.A.8) family. In terms of assembly, homotetramer; each monomer provides an independent water pore. Component of the ankyrin-1 complex in the erythrocyte, composed of ANK1, RHCE, RHAG, SLC4A1, EPB42, GYPA, GYPB and AQP1. Interacts with EPHB2; involved in endolymph production in the inner ear. Identified in a complex with STOM. Interacts (via the N-terminal) with ANK1 (via ANK 1-5 repeats). Interacts (via the C-terminal) with EPB42. As to expression, detected in erythrocytes (at protein level). In the kidney, expressed on luminal and basal borders of proximal tubules and in the thin limb of Henle's loop (at protein level).

Its subcellular location is the cell membrane. It carries out the reaction H2O(in) = H2O(out). The enzyme catalyses nitric oxide(out) = nitric oxide(in). It catalyses the reaction CO2(out) = CO2(in). The catalysed reaction is glycerol(in) = glycerol(out). It carries out the reaction H2O2(out) = H2O2(in). The enzyme catalyses K(+)(in) = K(+)(out). It catalyses the reaction Na(+)(in) = Na(+)(out). Forms a water channel that facilitates the transport of water across cell membranes, playing a crucial role in water homeostasis in various tissues. Could also be permeable to small solutes including hydrogen peroxide, glycerol and gases such as amonnia (NH3), nitric oxide (NO) and carbon dioxide (CO2). Recruited to the ankyrin-1 complex, a multiprotein complex of the erythrocyte membrane, it could be part of a CO2 metabolon, linking facilitated diffusion of CO2 across the membrane, anion exchange of Cl(-)/HCO3(-) and interconversion of dissolved CO2 and carbonic acid in the cytosol. In vitro, it shows non-selective gated cation channel activity and may be permeable to cations like K(+) and Na(+) in vivo. In Mus musculus (Mouse), this protein is Aquaporin-1.